We begin with the raw amino-acid sequence, 251 residues long: Pyridoxine 5'-phosphate synthase (251 aa).

N7 lines the 3-amino-2-oxopropyl phosphate pocket. 9–10 (DH) lines the 1-deoxy-D-xylulose 5-phosphate pocket. Residue R18 participates in 3-amino-2-oxopropyl phosphate binding. H43 functions as the Proton acceptor in the catalytic mechanism. The 1-deoxy-D-xylulose 5-phosphate site is built by R45 and H50. E70 (proton acceptor) is an active-site residue. T100 serves as a coordination point for 1-deoxy-D-xylulose 5-phosphate. H198 acts as the Proton donor in catalysis. 3-amino-2-oxopropyl phosphate-binding positions include A199 and 220–221 (GH).

Belongs to the PNP synthase family. As to quaternary structure, homooctamer; tetramer of dimers.

Its subcellular location is the cytoplasm. It carries out the reaction 3-amino-2-oxopropyl phosphate + 1-deoxy-D-xylulose 5-phosphate = pyridoxine 5'-phosphate + phosphate + 2 H2O + H(+). Its pathway is cofactor biosynthesis; pyridoxine 5'-phosphate biosynthesis; pyridoxine 5'-phosphate from D-erythrose 4-phosphate: step 5/5. Its function is as follows. Catalyzes the complicated ring closure reaction between the two acyclic compounds 1-deoxy-D-xylulose-5-phosphate (DXP) and 3-amino-2-oxopropyl phosphate (1-amino-acetone-3-phosphate or AAP) to form pyridoxine 5'-phosphate (PNP) and inorganic phosphate. The polypeptide is Pyridoxine 5'-phosphate synthase (Aromatoleum aromaticum (strain DSM 19018 / LMG 30748 / EbN1) (Azoarcus sp. (strain EbN1))).